Reading from the N-terminus, the 137-residue chain is Aspartate 1-decarboxylase (137 aa).

S25 serves as the catalytic Schiff-base intermediate with substrate; via pyruvic acid. Residue S25 is modified to Pyruvic acid (Ser). Position 57 (T57) interacts with substrate. Y58 (proton donor) is an active-site residue. A substrate-binding site is contributed by 73 to 75 (GAA).

Belongs to the PanD family. As to quaternary structure, heterooctamer of four alpha and four beta subunits. It depends on pyruvate as a cofactor. Post-translationally, is synthesized initially as an inactive proenzyme, which is activated by self-cleavage at a specific serine bond to produce a beta-subunit with a hydroxyl group at its C-terminus and an alpha-subunit with a pyruvoyl group at its N-terminus.

Its subcellular location is the cytoplasm. It carries out the reaction L-aspartate + H(+) = beta-alanine + CO2. It functions in the pathway cofactor biosynthesis; (R)-pantothenate biosynthesis; beta-alanine from L-aspartate: step 1/1. Catalyzes the pyruvoyl-dependent decarboxylation of aspartate to produce beta-alanine. This is Aspartate 1-decarboxylase from Thermobifida fusca (strain YX).